The primary structure comprises 337 residues: DNA-directed RNA polymerase subunit alpha (337 aa).

The tract at residues 1–233 (MIQKNWQELI…DQLSIFVNFE (233 aa)) is alpha N-terminal domain (alpha-NTD). An alpha C-terminal domain (alpha-CTD) region spans residues 249–337 (FNPALLKKVD…DLAKRYEDQY (89 aa)).

This sequence belongs to the RNA polymerase alpha chain family. Homodimer. The RNAP catalytic core consists of 2 alpha, 1 beta, 1 beta' and 1 omega subunit. When a sigma factor is associated with the core the holoenzyme is formed, which can initiate transcription.

The catalysed reaction is RNA(n) + a ribonucleoside 5'-triphosphate = RNA(n+1) + diphosphate. DNA-dependent RNA polymerase catalyzes the transcription of DNA into RNA using the four ribonucleoside triphosphates as substrates. The polypeptide is DNA-directed RNA polymerase subunit alpha (Brucella suis (strain ATCC 23445 / NCTC 10510)).